Here is a 992-residue protein sequence, read N- to C-terminus: Disks large-associated protein 4 (992 aa).

Basic and acidic residues predominate over residues 1-20 (MKGLGDSRPRHLSDSLDPPH). Disordered regions lie at residues 1–31 (MKGL…DRNP) and 154–226 (APSM…ASGL). The span at 162–171 (GKVGGNGGKK) shows a compositional bias: gly residues. Positions 172-194 (GVLEDGKGRRAKSKERAKAGEPK) are enriched in basic and acidic residues. Over residues 199 to 208 (SNISGWWSSD) the composition is skewed to polar residues. Residues Ser206 and Ser207 each carry the phosphoserine modification. An Omega-N-methylarginine modification is found at Arg290. Disordered stretches follow at residues 342–435 (TTLL…SWEE), 527–665 (SVSL…RKLS), 677–751 (VPKE…GPRQ), 763–798 (SYGD…AQPG), and 915–992 (TPEK…QTRL). Phosphoserine occurs at positions 377, 380, 384, 388, 405, 415, and 421. Over residues 399–413 (LRATQQSLGEQSNPR) the composition is skewed to polar residues. The segment covering 528–554 (VSLQSLSPPPSTGSLSNSRTLPSSSCL) has biased composition (low complexity). Residues 576–591 (VTVQSSTESAQDTYLD) are compositionally biased toward polar residues. Phosphoserine is present on residues Ser580, Ser581, Ser609, Ser611, Ser665, and Ser744. A compositionally biased stretch (low complexity) spans 600–620 (TSQSGLSNSSDSLDSSTRPPS). Residue Thr915 is modified to Phosphothreonine. Composition is skewed to basic and acidic residues over residues 915–925 (TPEKRKEEKKP) and 940–958 (VSRD…EARK). The span at 969-978 (VRQNSATESA) shows a compositional bias: polar residues. Ser973 is subject to Phosphoserine.

The protein belongs to the SAPAP family. In terms of assembly, interacts with DLG1 and DLG4/PSD-95. Expressed in brain.

It is found in the membrane. Its function is as follows. May play a role in the molecular organization of synapses and neuronal cell signaling. Could be an adapter protein linking ion channel to the subsynaptic cytoskeleton. May induce enrichment of PSD-95/SAP90 at the plasma membrane. The sequence is that of Disks large-associated protein 4 (Dlgap4) from Rattus norvegicus (Rat).